The chain runs to 466 residues: UDP-N-acetylglucosamine--dolichyl-phosphate N-acetylglucosaminephosphotransferase (466 aa).

Residues alanine 12–valine 32 traverse the membrane as a helical segment. Aspartate 57 contacts UDP-N-acetyl-alpha-D-glucosamine. A glycan (N-linked (GlcNAc...) asparagine) is linked at asparagine 59. Glutamate 90 is a binding site for UDP-N-acetyl-alpha-D-glucosamine. 2 consecutive transmembrane segments (helical) span residues serine 91–leucine 111 and proline 124–valine 144. Lysine 155 contributes to the dolichyl phosphate binding site. 2 helical membrane-spanning segments follow: residues isoleucine 156–valine 176 and glycine 236–phenylalanine 256. Isoleucine 255–isoleucine 263 is a binding site for dolichyl phosphate. Asparagine 262 provides a ligand contact to Mg(2+). The next 4 membrane-spanning stretches (helical) occupy residues isoleucine 263 to valine 283, aspartate 316 to tryptophan 336, valine 345 to threonine 365, and leucine 374 to valine 394. Asparagine 268 provides a ligand contact to UDP-N-acetyl-alpha-D-glucosamine. Aspartate 349 lines the Mg(2+) pocket. A UDP-N-acetyl-alpha-D-glucosamine-binding site is contributed by arginine 398–arginine 400. N-linked (GlcNAc...) asparagine glycosylation occurs at asparagine 416. Residues cysteine 442–tyrosine 462 traverse the membrane as a helical segment.

Belongs to the glycosyltransferase 4 family. The cofactor is Mg(2+).

The protein localises to the endoplasmic reticulum membrane. The catalysed reaction is a di-trans,poly-cis-dolichyl phosphate + UDP-N-acetyl-alpha-D-glucosamine = an N-acetyl-alpha-D-glucosaminyl-diphospho-di-trans,poly-cis-dolichol + UMP. Its pathway is protein modification; protein glycosylation. With respect to regulation, inhibited by natural nucleoside antibiotic tunicamycin, which acts as a structural analog and competitor of UDP-GlcNAc. Its function is as follows. UDP-N-acetylglucosamine--dolichyl-phosphate N-acetylglucosaminephosphotransferase that operates in the biosynthetic pathway of dolichol-linked oligosaccharides, the glycan precursors employed in protein asparagine (N)-glycosylation. The assembly of dolichol-linked oligosaccharides begins on the cytosolic side of the endoplasmic reticulum membrane and finishes in its lumen. The sequential addition of sugars to dolichol pyrophosphate produces dolichol-linked oligosaccharides containing fourteen sugars, including two GlcNAcs, nine mannoses and three glucoses. Once assembled, the oligosaccharide is transferred from the lipid to nascent proteins by oligosaccharyltransferases. Catalyzes the initial step of dolichol-linked oligosaccharide biosynthesis, transfering GlcNAc-1-P from cytosolic UDP-GlcNAc onto the carrier lipid dolichyl phosphate (P-dolichol), yielding GlcNAc-P-P-dolichol embedded in the cytoplasmic leaflet of the endoplasmic reticulum membrane. The chain is UDP-N-acetylglucosamine--dolichyl-phosphate N-acetylglucosaminephosphotransferase (NAGT) from Leishmania amazonensis.